The following is a 244-amino-acid chain: Triosephosphate isomerase (244 aa).

9 to 11 (NWK) provides a ligand contact to substrate. The active-site Electrophile is His-93. Glu-160 functions as the Proton acceptor in the catalytic mechanism. Substrate contacts are provided by Gly-166 and Ser-206.

This sequence belongs to the triosephosphate isomerase family. As to quaternary structure, homodimer.

The protein localises to the cytoplasm. The enzyme catalyses D-glyceraldehyde 3-phosphate = dihydroxyacetone phosphate. Its pathway is carbohydrate biosynthesis; gluconeogenesis. It functions in the pathway carbohydrate degradation; glycolysis; D-glyceraldehyde 3-phosphate from glycerone phosphate: step 1/1. Its function is as follows. Involved in the gluconeogenesis. Catalyzes stereospecifically the conversion of dihydroxyacetone phosphate (DHAP) to D-glyceraldehyde-3-phosphate (G3P). The sequence is that of Triosephosphate isomerase from Mycoplasma genitalium (strain ATCC 33530 / DSM 19775 / NCTC 10195 / G37) (Mycoplasmoides genitalium).